The sequence spans 195 residues: Imidazoleglycerol-phosphate dehydratase (195 aa).

Belongs to the imidazoleglycerol-phosphate dehydratase family.

It localises to the cytoplasm. The catalysed reaction is D-erythro-1-(imidazol-4-yl)glycerol 3-phosphate = 3-(imidazol-4-yl)-2-oxopropyl phosphate + H2O. Its pathway is amino-acid biosynthesis; L-histidine biosynthesis; L-histidine from 5-phospho-alpha-D-ribose 1-diphosphate: step 6/9. The sequence is that of Imidazoleglycerol-phosphate dehydratase from Burkholderia vietnamiensis (strain G4 / LMG 22486) (Burkholderia cepacia (strain R1808)).